Here is a 308-residue protein sequence, read N- to C-terminus: Acyl transferase (308 aa).

Catalysis depends on charge relay system residues Ser116, Asp213, and His243.

The protein belongs to the LuxD family.

Its pathway is lipid metabolism; fatty acid reduction for biolumincescence. Acyl transferase is part of the fatty acid reductase system required for aldehyde biosynthesis; it produces fatty acids for the luminescent reaction. This Shewanella hanedai (Alteromonas hanedai) protein is Acyl transferase.